Here is a 490-residue protein sequence, read N- to C-terminus: Cytochrome P450 2C54 (490 aa).

Ser-127 is subject to Phosphoserine. N6-acetyllysine is present on residues Lys-252 and Lys-375. Residue Cys-435 coordinates heme.

Belongs to the cytochrome P450 family. Requires heme as cofactor. In terms of tissue distribution, expressed in liver.

Its subcellular location is the endoplasmic reticulum membrane. It localises to the microsome membrane. The catalysed reaction is an organic molecule + reduced [NADPH--hemoprotein reductase] + O2 = an alcohol + oxidized [NADPH--hemoprotein reductase] + H2O + H(+). In terms of biological role, metabolizes arachidonic acid mainly to 12-hydroxyeicosatetraenoic acid (HETE). In Mus musculus (Mouse), this protein is Cytochrome P450 2C54.